A 235-amino-acid polypeptide reads, in one-letter code: UPF0702 transmembrane protein YdfS (235 aa).

The next 2 membrane-spanning stretches (helical) occupy residues 32 to 52 (MTIFDFIAAITLGAIAAGLAY) and 60 to 80 (NMAISFSIFVLTIFLISFLSI).

This sequence belongs to the UPF0702 family.

The protein resides in the cell membrane. This Bacillus subtilis (strain 168) protein is UPF0702 transmembrane protein YdfS (ydfS).